We begin with the raw amino-acid sequence, 279 residues long: Four and a half LIM domains protein 2 (279 aa).

The C4-type zinc-finger motif lies at Cys-7–Cys-31. LIM zinc-binding domains lie at Cys-40–Cys-92, Cys-101–Cys-153, and Cys-162–Cys-212. Residue Lys-78 forms a Glycyl lysine isopeptide (Lys-Gly) (interchain with G-Cter in SUMO2) linkage. Glycyl lysine isopeptide (Lys-Gly) (interchain with G-Cter in SUMO2) cross-links involve residues Lys-167 and Lys-220. The LIM zinc-binding 4 domain occupies Cys-221–Cys-275. Residue Ser-238 is modified to Phosphoserine.

In terms of assembly, interacts with ZNF638 and TTN/titin. Interacts with E4F1. Interacts with GRB7. Interacts with SIRT1 and FOXO1. Interacts with CEFIP and calcineurin. Interacts with FOXK1.

It is found in the cytoplasm. Its subcellular location is the nucleus. The protein resides in the myofibril. The protein localises to the sarcomere. It localises to the z line. In terms of biological role, may function as a molecular transmitter linking various signaling pathways to transcriptional regulation. Negatively regulates the transcriptional repressor E4F1 and may function in cell growth. Inhibits the transcriptional activity of FOXO1 and its apoptotic function by enhancing the interaction of FOXO1 with SIRT1 and FOXO1 deacetylation. Negatively regulates the calcineurin/NFAT signaling pathway in cardiomyocytes. The sequence is that of Four and a half LIM domains protein 2 (FHL2) from Bos taurus (Bovine).